A 381-amino-acid polypeptide reads, in one-letter code: Opsin Rh2 (381 aa).

Residues 1-56 lie on the Extracellular side of the membrane; sequence MERSHLPETPFDLAHSGPRFQAQSSGNGSVLDNVLPDMAHLVNPYWSRFAPMDPMM. N-linked (GlcNAc...) asparagine glycosylation is present at Asn-27. Residues 57-81 form a helical membrane-spanning segment; the sequence is SKILGLFTLAIMIISCCGNGVVVYI. Topologically, residues 82-93 are cytoplasmic; sequence FGGTKSLRTPAN. A helical membrane pass occupies residues 94 to 119; it reads LLVLNLAFSDFCMMASQSPVMIINFY. Over 120 to 133 the chain is Extracellular; sequence YETWVLGPLWCDIY. Residues Cys-130 and Cys-207 are joined by a disulfide bond. A helical membrane pass occupies residues 134 to 153; sequence AGCGSLFGCVSIWSMCMIAF. Residues 154–172 are Cytoplasmic-facing; it reads DRYNVIVKGINGTPMTIKT. The chain crosses the membrane as a helical span at residues 173 to 196; that stretch reads SIMKILFIWMMAVFWTVMPLIGWS. Over 197 to 220 the chain is Extracellular; the sequence is AYVPEGNLTACSIDYMTRMWNPRS. A helical transmembrane segment spans residues 221–248; that stretch reads YLITYSLFVYYTPLFLICYSYWFIIAAV. Over 249 to 283 the chain is Cytoplasmic; it reads AAHEKAMREQAKKMNVKSLRSSEDCDKSAEGKLAK. The helical transmembrane segment at 284-307 threads the bilayer; sequence VALTTISLWFMAWTPYLVICYFGL. Residues 308–314 lie on the Extracellular side of the membrane; that stretch reads FKIDGLT. Residues 315 to 339 form a helical membrane-spanning segment; that stretch reads PLTTIWGATFAKTSAVYNPIVYGIS. At Lys-326 the chain carries N6-(retinylidene)lysine. The Cytoplasmic segment spans residues 340 to 381; the sequence is HPKYRIVLKEKCPMCVFGNTDEPKPDAPASDTETTSEADSKA. Positions 359–381 are disordered; that stretch reads TDEPKPDAPASDTETTSEADSKA. Positions 370–381 are enriched in polar residues; the sequence is DTETTSEADSKA.

The protein belongs to the G-protein coupled receptor 1 family. Opsin subfamily. Phosphorylated on some or all of the serine and threonine residues present in the C-terminal region. In terms of tissue distribution, predominant opsin expressed in the dorsal ocelli.

It localises to the membrane. Visual pigments are the light-absorbing molecules that mediate vision. They consist of an apoprotein, opsin, covalently linked to cis-retinal. In Drosophila melanogaster (Fruit fly), this protein is Opsin Rh2 (Rh2).